We begin with the raw amino-acid sequence, 270 residues long: Pyrroline-5-carboxylate reductase (270 aa).

It belongs to the pyrroline-5-carboxylate reductase family.

Its subcellular location is the cytoplasm. The enzyme catalyses L-proline + NADP(+) = (S)-1-pyrroline-5-carboxylate + NADPH + 2 H(+). It carries out the reaction L-proline + NAD(+) = (S)-1-pyrroline-5-carboxylate + NADH + 2 H(+). It participates in amino-acid biosynthesis; L-proline biosynthesis; L-proline from L-glutamate 5-semialdehyde: step 1/1. In terms of biological role, catalyzes the reduction of 1-pyrroline-5-carboxylate (PCA) to L-proline. This is Pyrroline-5-carboxylate reductase from Corynebacterium melassecola.